Reading from the N-terminus, the 99-residue chain is Ubiquitin-related modifier 1 homolog (99 aa).

Residue Gly99 is modified to 1-thioglycine. Gly99 is covalently cross-linked (Glycyl lysine isopeptide (Gly-Lys) (interchain with K-? in acceptor proteins)).

Belongs to the URM1 family. Post-translationally, C-terminal thiocarboxylation occurs in 2 steps, it is first acyl-adenylated (-COAMP) via the hesA/moeB/thiF part of the MOCS3 homolog, then thiocarboxylated (-COSH) via the rhodanese domain of the MOCS3 homolog.

Its subcellular location is the cytoplasm. The protein operates within tRNA modification; 5-methoxycarbonylmethyl-2-thiouridine-tRNA biosynthesis. In terms of biological role, acts as a sulfur carrier required for 2-thiolation of mcm(5)S(2)U at tRNA wobble positions of cytosolic tRNA(Lys), tRNA(Glu) and tRNA(Gln). Serves as sulfur donor in tRNA 2-thiolation reaction by being thiocarboxylated (-COSH) at its C-terminus by MOCS3. The sulfur is then transferred to tRNA to form 2-thiolation of mcm(5)S(2)U. Also acts as a ubiquitin-like protein (UBL) that is covalently conjugated via an isopeptide bond to lysine residues of target proteins. The thiocarboxylated form serves as substrate for conjugation and oxidative stress specifically induces the formation of UBL-protein conjugates. The sequence is that of Ubiquitin-related modifier 1 homolog from Chlamydomonas reinhardtii (Chlamydomonas smithii).